The chain runs to 343 residues: Heat-inducible transcription repressor HrcA (343 aa).

It belongs to the HrcA family.

Its function is as follows. Negative regulator of class I heat shock genes (grpE-dnaK-dnaJ and groELS operons). Prevents heat-shock induction of these operons. In Mycolicibacterium gilvum (strain PYR-GCK) (Mycobacterium gilvum (strain PYR-GCK)), this protein is Heat-inducible transcription repressor HrcA.